The chain runs to 502 residues: MSGGPMGGRPGGRGAPAVQQNIPSTLLQDHENQRLFEMLGRKCLTLATAVVQLYLALPPGAEHWTKEHCGAVCFVKDNPQKSYFIRLYGLQAGRLLWEQELYSQLVYSTPTPFFHTFAGDDCQAGLNFADEDEAQAFRALVQEKIQKRNQRQSGDRRQLPPPPTPANEERRGGLPPLPLHPGGDQGGPPVGPLSLGLATVDIQNPDITSSRYRGLPAPGPSPADKKRSGKKKISKADIGAPSGFKHVSHVGWDPQNGFDVNNLDPDLRSLFSRAGISEAQLTDAETSKLIYDFIEDQGGLEAVRQEMRRQEPLPPPPPPSRGGNQLPRPPIVGGNKGRSGPLPPVPLGIAPPPPTPRGPPPPGRGGPPPPPPPATGRSGPLPPPPPGAGGPPMPPPPPPPPPPPSSGNGPAPPPLPPALVPAGGLAPGGGRGALLDQIRQGIQLNKTPGAPESSALQPPPQSSEGLVGALMHVMQKRSRAIHSSDEGEDQAGDEDEDDEWDD.

The WH1 domain maps to 39–148; sequence LGRKCLTLAT…ALVQEKIQKR (110 aa). The disordered stretch occupies residues 146–240; sequence QKRNQRQSGD…KKISKADIGA (95 aa). The span at 201 to 211 shows a compositional bias: polar residues; that stretch reads DIQNPDITSSR. S221 is modified (phosphoserine). The CRIB domain occupies 238-251; it reads IGAPSGFKHVSHVG. Residue Y291 is modified to Phosphotyrosine; by FYN and HCK. A disordered region spans residues 307–502; the sequence is MRRQEPLPPP…DEDEDDEWDD (196 aa). 2 GRSGPLPPXP motif repeats span residues 337-346 and 376-385; these read GRSGPLPPVP and GRSGPLPPPP. Residues 341-419 are compositionally biased toward pro residues; it reads PLPPVPLGIA…PAPPPLPPAL (79 aa). Residues 430 to 447 enclose the WH2 domain; that stretch reads GRGALLDQIRQGIQLNKT. 2 positions are modified to phosphoserine; by CK2: S483 and S484. A compositionally biased stretch (acidic residues) spans 486-502; the sequence is EGEDQAGDEDEDDEWDD.

In terms of assembly, binds the Arp2/3 complex. Interacts with CDC42, RAC, NCK, HCK, FYN, SRC kinase FGR, BTK, ABL1, PSTPIP1, WIP, and to the p85 subunit of PLC-gamma. Interacts (via C-terminus) with ALDOA. Interacts with NCK1 (via SH3 domains). Interacts with FCHSD2. As to quaternary structure, (Microbial infection) Interacts with E.coli effector protein EspF(U). Post-translationally, phosphorylated at Tyr-291 by FYN and HCK, inducing WAS effector activity after TCR engagement. Phosphorylation at Tyr-291 enhances WAS activity in promoting actin polymerization and filopodia formation. Expressed predominantly in the thymus. Also found, to a much lesser extent, in the spleen.

Its subcellular location is the cytoplasm. It is found in the cytoskeleton. It localises to the nucleus. In terms of biological role, effector protein for Rho-type GTPases that regulates actin filament reorganization via its interaction with the Arp2/3 complex. Important for efficient actin polymerization. Possible regulator of lymphocyte and platelet function. Mediates actin filament reorganization and the formation of actin pedestals upon infection by pathogenic bacteria. In addition to its role in the cytoplasmic cytoskeleton, also promotes actin polymerization in the nucleus, thereby regulating gene transcription and repair of damaged DNA. Promotes homologous recombination (HR) repair in response to DNA damage by promoting nuclear actin polymerization, leading to drive motility of double-strand breaks (DSBs). The protein is Actin nucleation-promoting factor WAS (WAS) of Homo sapiens (Human).